We begin with the raw amino-acid sequence, 124 residues long: Holo-[acyl-carrier-protein] synthase (124 aa).

Mg(2+) is bound by residues aspartate 5 and glutamate 51.

Belongs to the P-Pant transferase superfamily. AcpS family. Requires Mg(2+) as cofactor.

Its subcellular location is the cytoplasm. The enzyme catalyses apo-[ACP] + CoA = holo-[ACP] + adenosine 3',5'-bisphosphate + H(+). Its function is as follows. Transfers the 4'-phosphopantetheine moiety from coenzyme A to a Ser of acyl-carrier-protein. The chain is Holo-[acyl-carrier-protein] synthase from Hydrogenobaculum sp. (strain Y04AAS1).